A 239-amino-acid polypeptide reads, in one-letter code: Probable 2-phosphosulfolactate phosphatase (239 aa).

The protein belongs to the ComB family. Mg(2+) serves as cofactor.

The enzyme catalyses (2R)-O-phospho-3-sulfolactate + H2O = (2R)-3-sulfolactate + phosphate. In Clostridium botulinum (strain Kyoto / Type A2), this protein is Probable 2-phosphosulfolactate phosphatase.